Reading from the N-terminus, the 714-residue chain is Probable metal-nicotianamine transporter YSL5 (714 aa).

Positions 17 to 44 (HELQETGFSPETEKVKNKNFEEDEEEED) are disordered. Positions 27-36 (ETEKVKNKNF) are enriched in basic and acidic residues. Helical transmembrane passes span 67 to 87 (AFVV…KLNL), 90 to 110 (GIIP…VKTW), 135 to 155 (CVVA…LFGM), 175 to 195 (LGWI…SVVP), 236 to 256 (VLGK…FFTG), 295 to 315 (IINI…WPLI), 340 to 360 (VFIA…KVLS), 413 to 433 (IPTW…TAIL), 445 to 465 (ILVI…GAGL), 477 to 497 (LAIF…LAGL), 531 to 551 (FVSQ…VFWL), 593 to 613 (LVLC…KDSL), and 631 to 651 (FFLG…LFIW).

The protein belongs to the YSL (TC 2.A.67.2) family.

Its subcellular location is the membrane. Functionally, may be involved in the transport of nicotianamine-chelated metals. This chain is Probable metal-nicotianamine transporter YSL5 (YSL5), found in Arabidopsis thaliana (Mouse-ear cress).